Here is a 273-residue protein sequence, read N- to C-terminus: Mitochondrial inner membrane protease ATP23 (273 aa).

The segment covering 1 to 11 (MASPQDNTPSG) has biased composition (polar residues). The segment at 1-33 (MASPQDNTPSGATPKPQTHEETPDQVKLRINGG) is disordered. A compositionally biased stretch (basic and acidic residues) spans 17 to 27 (QTHEETPDQVK). His-170 contacts a divalent metal cation. Glu-171 is a catalytic residue. His-174 contacts a divalent metal cation.

The protein belongs to the peptidase M76 family.

Its subcellular location is the mitochondrion inner membrane. In terms of biological role, has a dual role in the assembly of mitochondrial ATPase. Acts as a protease that removes N-terminal residues of mitochondrial ATPase CF(0) subunit 6 at the intermembrane space side. Also involved in the correct assembly of the membrane-embedded ATPase CF(0) particle, probably mediating association of subunit 6 with the subunit 9 ring. The chain is Mitochondrial inner membrane protease ATP23 (ATP23) from Pyricularia oryzae (strain 70-15 / ATCC MYA-4617 / FGSC 8958) (Rice blast fungus).